Reading from the N-terminus, the 191-residue chain is MLKNLRETMRTAPIVRRGTYNYFIHPISDGVPVVKPELLREVIACMVKNADLDVDKIVTIEAMGLPLGAALSTMTDIPFIIIRKRKYELPGEIAVHQTTGYSRGELYLNGINKGDRVLIIDDVISTGGTMKAVIKALEKAGAVIKDIVVVIERGDGKKSIEELGYDVQTLIKIDVDENGVKILGCIDEECQ.

It belongs to the purine/pyrimidine phosphoribosyltransferase family. Archaeal HPRT subfamily. As to quaternary structure, homodimer.

The protein localises to the cytoplasm. It carries out the reaction IMP + diphosphate = hypoxanthine + 5-phospho-alpha-D-ribose 1-diphosphate. The catalysed reaction is GMP + diphosphate = guanine + 5-phospho-alpha-D-ribose 1-diphosphate. It functions in the pathway purine metabolism; IMP biosynthesis via salvage pathway; IMP from hypoxanthine: step 1/1. Functionally, catalyzes a salvage reaction resulting in the formation of IMP that is energically less costly than de novo synthesis. The polypeptide is Hypoxanthine/guanine phosphoribosyltransferase (Methanocella paludicola (strain DSM 17711 / JCM 13418 / NBRC 101707 / SANAE)).